The chain runs to 599 residues: Sulfite reductase [NADPH] flavoprotein alpha-component (599 aa).

Positions Val-64 to Val-202 constitute a Flavodoxin-like domain. FMN-binding positions include Ser-70–Ala-75, Ser-117–Gly-120, and Leu-153–Cys-162. Residues Asp-234–Pro-448 form the FAD-binding FR-type domain. Residues Thr-322, Ala-356, Arg-386–Ser-389, Thr-404–Gly-406, Tyr-410, and Gly-419–Ser-422 each bind FAD. NADP(+) is bound by residues Ser-519–Arg-520, Lys-525–Gln-529, and Asp-561. Tyr-599 lines the FAD pocket.

Belongs to the NADPH-dependent sulphite reductase flavoprotein subunit CysJ family. This sequence in the N-terminal section; belongs to the flavodoxin family. It in the C-terminal section; belongs to the flavoprotein pyridine nucleotide cytochrome reductase family. Alpha(8)-beta(8). The alpha component is a flavoprotein, the beta component is a hemoprotein. The cofactor is FAD. Requires FMN as cofactor.

The enzyme catalyses hydrogen sulfide + 3 NADP(+) + 3 H2O = sulfite + 3 NADPH + 4 H(+). It participates in sulfur metabolism; hydrogen sulfide biosynthesis; hydrogen sulfide from sulfite (NADPH route): step 1/1. In terms of biological role, component of the sulfite reductase complex that catalyzes the 6-electron reduction of sulfite to sulfide. This is one of several activities required for the biosynthesis of L-cysteine from sulfate. The flavoprotein component catalyzes the electron flow from NADPH -&gt; FAD -&gt; FMN to the hemoprotein component. In Salmonella typhi, this protein is Sulfite reductase [NADPH] flavoprotein alpha-component.